Consider the following 416-residue polypeptide: Imidazolonepropionase (416 aa).

The Fe(3+) site is built by His81 and His83. Positions 81 and 83 each coordinate Zn(2+). Positions 90, 153, and 186 each coordinate 4-imidazolone-5-propanoate. Tyr153 provides a ligand contact to N-formimidoyl-L-glutamate. His251 is a binding site for Fe(3+). His251 serves as a coordination point for Zn(2+). Gln254 is a binding site for 4-imidazolone-5-propanoate. Residue Asp326 coordinates Fe(3+). Position 326 (Asp326) interacts with Zn(2+). N-formimidoyl-L-glutamate contacts are provided by Asn328 and Gly330. Thr331 contacts 4-imidazolone-5-propanoate.

This sequence belongs to the metallo-dependent hydrolases superfamily. HutI family. The cofactor is Zn(2+). Fe(3+) serves as cofactor.

The protein localises to the cytoplasm. The catalysed reaction is 4-imidazolone-5-propanoate + H2O = N-formimidoyl-L-glutamate. Its pathway is amino-acid degradation; L-histidine degradation into L-glutamate; N-formimidoyl-L-glutamate from L-histidine: step 3/3. Functionally, catalyzes the hydrolytic cleavage of the carbon-nitrogen bond in imidazolone-5-propanoate to yield N-formimidoyl-L-glutamate. It is the third step in the universal histidine degradation pathway. The sequence is that of Imidazolonepropionase from Paracidovorax citrulli (strain AAC00-1) (Acidovorax citrulli).